A 382-amino-acid polypeptide reads, in one-letter code: uncharacterized protein (382 aa).

12 consecutive transmembrane segments (helical) span residues 14–34 (GLLLLTLAIAVLNTLVPLWLA), 45–65 (VVSSSYFTGNLVGTLLTGYVI), 79–99 (FIFAAGCAGLGLMIGFWSWLA), 102–122 (FVAGVGCAMIWVVVESALMCS), 131–151 (LLAAYMMVYYVGTFLGQLLVS), 157–177 (LMSVLPWVTGLTLAGILPLLF), 204–224 (LGVNGCIISGIVLGSLYGLMP), 235–255 (ASIGFWMAVLVSAGILGQWPI), 270–290 (VQVFVVILGSIAMLSQAAMAP), 291–311 (ALFILGAAGFTLYPVAMAWAC), 325–345 (ALLLSYTVGSLLGPSFTAMLM), and 348–368 (FSDNLLFIMIASVSFIYLLML).

The protein belongs to the major facilitator superfamily. YcaD (TC 2.A.1.26) family.

It localises to the cell inner membrane. This is an uncharacterized protein from Shigella dysenteriae serotype 1 (strain Sd197).